Reading from the N-terminus, the 408-residue chain is 2-acyl-4-prenylphloroglucinol 6-prenyltransferase, chloroplastic (408 aa).

A chloroplast-targeting transit peptide spans 1 to 46 (MELSSACNLSLKPNYYYYPTSLFPSNNSYNNLKASSYYQTQRPIKC). 9 helical membrane passes run 119–139 (PIPF…ELLK), 146–166 (WQLM…HIYI), 193–213 (SVKS…LLMI), 217–237 (CGLF…MYSV), 257–277 (IGIG…GLPF), 281–301 (PPFT…SILK), 326–346 (IVLV…GVAI), 355–375 (YIMI…TWLL), and 388–408 (YYHF…FIST).

Belongs to the UbiA prenyltransferase family. As to quaternary structure, homo- and heteromer. Interacts with PT1L, forming a functional metabolon. Mg(2+) serves as cofactor. As to expression, expressed in trichomes.

The protein localises to the plastid. It is found in the chloroplast membrane. The enzyme catalyses a 2-acyl-4-prenylphloroglucinol + dimethylallyl diphosphate = a 2-acyl-4,6-diprenylphloroglucinol + diphosphate. It catalyses the reaction a 2-acyl-4,6-diprenylphloroglucinol + dimethylallyl diphosphate = a 2-acyl-4,6,6-triprenylphloroglucinol + diphosphate. Its pathway is secondary metabolite biosynthesis. Its function is as follows. Involved in the biosynthesis of prenylated phenolics natural products which contribute to the bitter taste of beer and display broad biological activities. Catalyzes the two last prenylation steps in the beta-bitter acid pathway. Uses dimethylallyl diphosphate (DMAPP) as the prenyl donor. The protein is 2-acyl-4-prenylphloroglucinol 6-prenyltransferase, chloroplastic of Humulus lupulus (European hop).